Here is a 194-residue protein sequence, read N- to C-terminus: Putative manganese efflux pump MntP (194 aa).

6 helical membrane-spanning segments follow: residues 3-23, 37-57, 69-89, 110-132, 147-167, and 172-192; these read PFSI…AAIG, LRAG…GWLL, DHWI…VAGL, LGLA…SLAF, CTFS…NLIG, and MLGG…HLSG.

The protein belongs to the MntP (TC 9.B.29) family.

It localises to the cell inner membrane. Functionally, probably functions as a manganese efflux pump. This Xanthomonas euvesicatoria pv. vesicatoria (strain 85-10) (Xanthomonas campestris pv. vesicatoria) protein is Putative manganese efflux pump MntP.